A 1340-amino-acid chain; its full sequence is Early transcription factor large subunit homolog (1340 aa).

It is found in the virion. Functionally, putative initation factor. This Ornithodoros (relapsing fever ticks) protein is Early transcription factor large subunit homolog.